A 109-amino-acid polypeptide reads, in one-letter code: RNA-binding protein Hfq (109 aa).

Residues 9–68 (DPFLNALRKEKVSVSVYLVNGIKLQGQVEAFDQFCIVLRNTVNQMVYKHAISTIVPAKSV) form the Sm domain. The disordered stretch occupies residues 77–109 (PYHQNSNDEQDENVDDIHSDDLEIQENEGNIHE).

The protein belongs to the Hfq family. Homohexamer.

Functionally, RNA chaperone that binds small regulatory RNA (sRNAs) and mRNAs to facilitate mRNA translational regulation in response to envelope stress, environmental stress and changes in metabolite concentrations. Also binds with high specificity to tRNAs. This Francisella tularensis subsp. holarctica (strain FTNF002-00 / FTA) protein is RNA-binding protein Hfq.